Consider the following 101-residue polypeptide: 2-amino-4-ketopentanoate thiolase alpha subunit (101 aa).

This sequence belongs to the OrtA family. In terms of assembly, heterodimer with OrtB.

It carries out the reaction D-alanine + acetyl-CoA = (2R)-2-amino-4-oxopentanoate + CoA. With respect to regulation, completely inhibited by p-chloromercuribenzoate (p-ClHgBzO) and acetyl-CoA, and partially inhibited by N-ethylmaleimide. In terms of biological role, involved in the ornithine fermentation pathway. Catalyzes the thiolytic cleavage of 2-amino-4-ketopentanoate (AKP) with coenzyme A (CoA) to form acetyl-CoA and alanine. It is strictly specific for AKP. In Acetoanaerobium sticklandii (strain ATCC 12662 / DSM 519 / JCM 1433 / CCUG 9281 / NCIMB 10654 / HF) (Clostridium sticklandii), this protein is 2-amino-4-ketopentanoate thiolase alpha subunit.